Here is a 259-residue protein sequence, read N- to C-terminus: Short-chain dehydrogenase reductase 5 (259 aa).

Ile-12 to Val-36 contributes to the NAD(+) binding site. Ser-144 contributes to the substrate binding site. The active-site Proton acceptor is the Tyr-157.

Belongs to the short-chain dehydrogenases/reductases (SDR) family.

The protein is Short-chain dehydrogenase reductase 5 (SDR5) of Arabidopsis thaliana (Mouse-ear cress).